The chain runs to 286 residues: NAD kinase (286 aa).

Aspartate 68 serves as the catalytic Proton acceptor. NAD(+) contacts are provided by residues 68–69 (DG), lysine 73, 142–143 (ND), arginine 153, aspartate 172, 183–188 (TGYSFS), and glutamine 242.

It belongs to the NAD kinase family. A divalent metal cation is required as a cofactor.

It is found in the cytoplasm. The catalysed reaction is NAD(+) + ATP = ADP + NADP(+) + H(+). Its function is as follows. Involved in the regulation of the intracellular balance of NAD and NADP, and is a key enzyme in the biosynthesis of NADP. Catalyzes specifically the phosphorylation on 2'-hydroxyl of the adenosine moiety of NAD to yield NADP. This chain is NAD kinase, found in Natranaerobius thermophilus (strain ATCC BAA-1301 / DSM 18059 / JW/NM-WN-LF).